The chain runs to 205 residues: Nascent polypeptide-associated complex subunit alpha-like protein (205 aa).

Disordered stretches follow at residues 1-73 (MPSV…RKAM) and 137-166 (KAPN…DTGV). Residues 20–29 (EQQELEHSDE) show a composition bias toward basic and acidic residues. A compositionally biased stretch (acidic residues) spans 30-51 (PILEDDEDDDDEEDDNDEDDAQ). Residues 56–66 (GEGKSKQSRSE) are compositionally biased toward basic and acidic residues. In terms of domain architecture, NAC-A/B spans 63–128 (SRSEKKCRKA…AKIEDLSSQL (66 aa)). Over residues 155-165 (QEDEDEVDDTG) the composition is skewed to acidic residues. The UBA domain maps to 166 to 203 (VEPKDIELVMTQAGVSRTKAVKALKAADGDIVSAIMDL).

The protein belongs to the NAC-alpha family.

In terms of biological role, may promote appropriate targeting of ribosome-nascent polypeptide complexes. This chain is Nascent polypeptide-associated complex subunit alpha-like protein, found in Pinus taeda (Loblolly pine).